The chain runs to 386 residues: Acetylornithine aminotransferase (386 aa).

Residues 96-97 (GA) and phenylalanine 123 each bind pyridoxal 5'-phosphate. Arginine 126 provides a ligand contact to N(2)-acetyl-L-ornithine. Residue 208–211 (DEVQ) coordinates pyridoxal 5'-phosphate. N6-(pyridoxal phosphate)lysine is present on lysine 237. Serine 265 provides a ligand contact to N(2)-acetyl-L-ornithine. Threonine 266 contributes to the pyridoxal 5'-phosphate binding site.

It belongs to the class-III pyridoxal-phosphate-dependent aminotransferase family. ArgD subfamily. As to quaternary structure, homodimer. It depends on pyridoxal 5'-phosphate as a cofactor.

It localises to the cytoplasm. The enzyme catalyses N(2)-acetyl-L-ornithine + 2-oxoglutarate = N-acetyl-L-glutamate 5-semialdehyde + L-glutamate. It functions in the pathway amino-acid biosynthesis; L-arginine biosynthesis; N(2)-acetyl-L-ornithine from L-glutamate: step 4/4. In Bacillus cereus (strain ATCC 14579 / DSM 31 / CCUG 7414 / JCM 2152 / NBRC 15305 / NCIMB 9373 / NCTC 2599 / NRRL B-3711), this protein is Acetylornithine aminotransferase.